Reading from the N-terminus, the 50-residue chain is Photosystem II reaction center protein M (50 aa).

A helical membrane pass occupies residues 6–26; that stretch reads FGFVASLLFVGVPTIFLIGLF.

The protein belongs to the PsbM family. In terms of assembly, PSII is composed of 1 copy each of membrane proteins PsbA, PsbB, PsbC, PsbD, PsbE, PsbF, PsbH, PsbI, PsbJ, PsbK, PsbL, PsbM, PsbT, PsbX, PsbY, Psb30/Ycf12, peripheral proteins PsbO, CyanoQ (PsbQ), PsbU, PsbV and a large number of cofactors. It forms dimeric complexes.

The protein localises to the cellular thylakoid membrane. In terms of biological role, one of the components of the core complex of photosystem II (PSII). PSII is a light-driven water:plastoquinone oxidoreductase that uses light energy to abstract electrons from H(2)O, generating O(2) and a proton gradient subsequently used for ATP formation. It consists of a core antenna complex that captures photons, and an electron transfer chain that converts photonic excitation into a charge separation. This subunit is found at the monomer-monomer interface. The protein is Photosystem II reaction center protein M of Prochlorococcus marinus (strain MIT 9215).